The chain runs to 307 residues: Melanoma-associated antigen F1 (307 aa).

Residues 1-55 form a disordered region; the sequence is MLQTPESRGLPVPQAEGEKDGGHDGETRAPTASQERPKEELGAGREEGAAEPALT. 2 stretches are compositionally biased toward basic and acidic residues: residues 16–27 and 35–48; these read EGEKDGGHDGET and ERPKEELGAGREEG. An MAGE domain is found at 76–277; the sequence is LNRTVAELVQ…HWPVQYREAL (202 aa).

In terms of assembly, interacts (via MAGE domain) with RING-type zinc finger-containing E3 ubiquitin-protein ligases LNX1, TRIM27 and NSMCE1; the interaction is direct. Ubiquitous.

In terms of biological role, enhances ubiquitin ligase activity of RING-type zinc finger-containing E3 ubiquitin ligases. Proposed to act through recruitment and/or stabilization of the E2 ubiquitin-conjugating enzyme at the E3:substrate complex. MAGEF1-NSMCE1 ubiquitin ligase complex promotes proteasomal degradation of MMS19, a key component of the cytosolic iron-sulfur protein assembly (CIA) machinery. Down-regulation of MMS19 impairs the activity of several DNA repair and metabolism enzymes such as ERCC2/XPD, FANCJ, RTEL1 and POLD1 that require iron-sulfur clusters as cofactors. May negatively regulate genome integrity by inhibiting homologous recombination-mediated double-strand break DNA repair. This Homo sapiens (Human) protein is Melanoma-associated antigen F1.